Here is a 463-residue protein sequence, read N- to C-terminus: MMEVGILPVHVLYVFFIGAIILFMLLRKDTTFISLFGIFIISLWASHSLSASVSSLFHSFIYAAGELLPTIFIICFIVSMSDLLTKTGINEAMISPFASLVRGPVTAYWLIGGLMFAISLFFWPSPGVALIGAVLLPAAARAGLTPLAAAMAMNLFGHGFALSGDFVIQAAPKLTADAAGIPVGDVVSASIPLVLIMGVTTTTAAFIMIQRERKKQEHPTSFSPVLSGEQDNSLYLPKRLRSILAFLIPLAFLADIACMLLFNLQGNDATALIGGSAICILFTVHFFVYKHKGLEKITGYFIDGFKFGFKVFGPVIPIAAFFYLGDSGYESILGTSLPKGSHGIVNDLGIALSHMMPMSKELAATALTAAGAITGLDGSGFSGISLAGSIAKLFSSALHADPAILTALGQISAIWVGGGTLVPWALIPAAAICKVDPFELARKNFIPVAIGLLVTTLAAVMML.

11 helical membrane-spanning segments follow: residues 6-26, 31-51, 60-80, 101-123, 130-152, 189-209, 242-262, 269-289, 304-324, 413-433, and 443-463; these read ILPV…FMLL, TFIS…SLSA, FIYA…IVSM, VRGP…LFFW, LIGA…AAMA, ASIP…FIMI, SILA…MLLF, ATAL…FFVY, GFKF…FFYL, AIWV…AAIC, and KNFI…VMML.

The protein resides in the cell membrane. This is an uncharacterized protein from Bacillus subtilis (strain 168).